The following is a 354-amino-acid chain: Dihydroorotate dehydrogenase (quinone) (354 aa).

FMN is bound by residues 61 to 65 and Ala85; that span reads AGYDK. Lys65 serves as a coordination point for substrate. 110–114 is a binding site for substrate; that stretch reads NRFGF. Asn139 and Asn170 together coordinate FMN. Substrate is bound at residue Asn170. Residue Ser173 is the Nucleophile of the active site. Asn175 is a binding site for substrate. Residues Lys211 and Thr239 each contribute to the FMN site. Residue 240–241 participates in substrate binding; that stretch reads NT. FMN-binding positions include Gly261, Gly290, and 311-312; that span reads YT.

The protein belongs to the dihydroorotate dehydrogenase family. Type 2 subfamily. In terms of assembly, monomer. FMN is required as a cofactor.

Its subcellular location is the cell membrane. The catalysed reaction is (S)-dihydroorotate + a quinone = orotate + a quinol. The protein operates within pyrimidine metabolism; UMP biosynthesis via de novo pathway; orotate from (S)-dihydroorotate (quinone route): step 1/1. Its function is as follows. Catalyzes the conversion of dihydroorotate to orotate with quinone as electron acceptor. The sequence is that of Dihydroorotate dehydrogenase (quinone) from Cereibacter sphaeroides (strain ATCC 17023 / DSM 158 / JCM 6121 / CCUG 31486 / LMG 2827 / NBRC 12203 / NCIMB 8253 / ATH 2.4.1.) (Rhodobacter sphaeroides).